We begin with the raw amino-acid sequence, 875 residues long: MAAAPSHPAGLPCSPGPGSPPPPGGSDLQSLPPLLPQIPAPGSGVSFHIQIGLTREFVLLPAASELAHVKQLACSIVDQKFPECGFYGLYDKILLFKHDPTSANLLQLVRSAADIQEGDLVEVVLSASATFEDFQIRPHALTVHSYRAPAFCDHCGEMLFGLVRQGLKCDGCGLNYHKRCAFSIPNNCSGARKRRLSSTSLASGHSVRLGSSESLPCTAEELSRSTTDLLPRRPPSSSSSSSSSSFYTGRPIELDKMLMSKVKVPHTFLIHSYTRPTVCQACKKLLKGLFRQGLQCKDCKFNCHKRCATRVPNDCLGEALINGDVPMEEAADYSEADKSSLSDELEDSGVIPGSHAENALHASEEEEGEGGKAQSSLGYIPLMRVVQSVRHTTRKSSTTLREGWVVHYSNKDTLRKRHYWRLDCKCITLFQNNTTNRYYKEIPLSEILAVEPAQNFSLVPPGTNPHCFEIITANVTYFVGETPGGAPGGPSGQGTEAARGWETAIRQALMPVILQDAPSAPGHTPHRQASLSISVSNSQIQENVDIATVYQIFPDEVLGSGQFGVVYGGKHRKTGRDVAVKVIDKLRFPTKQESQLRNEVAILQSLRHPGIVNLECMFETPEKVFVVMEKLHGDMLEMILSSEKGRLPERLTKFLITQILVALRHLHFKNIVHCDLKPENVLLASADPFPQVKLCDFGFARIIGEKSFRRSVVGTPAYLAPEVLLNQGYNRSLDMWSVGVIMYVSLSGTFPFNEDEDINDQIQNAAFMYPASPWSHISSGAIDLINNLLQVKMRKRYSVDKSLSHPWLQEYQTWLDLRELEGKMGERYITHESDDARWDQFVSERHGTPAEGDLGGACLPQDHEMQGLAERISIL.

The segment at Met1 to Pro33 is disordered. Residues Ser14 to Gly24 show a composition bias toward pro residues. Ser26 and Ser30 each carry phosphoserine. Tyr87 carries the post-translational modification Phosphotyrosine. The Phorbol-ester/DAG-type 1 zinc-finger motif lies at Pro138–Cys188. A phosphoserine mark is found at Ser197, Ser198, Ser200, Ser203, Ser206, Ser211, Ser212, and Ser214. The disordered stretch occupies residues Arg224–Tyr247. Positions Ser236–Ser245 are enriched in low complexity. The residue at position 244 (Ser244) is a Phosphoserine; by CSNK1D and CSNK1E. Ser245 is modified (phosphoserine). The segment at Pro265–Cys315 adopts a Phorbol-ester/DAG-type 2 zinc-finger fold. One can recognise a PH domain in the interval Thr398–Met510. Position 408 is a phosphotyrosine (Tyr408). Tyr439 is modified (phosphotyrosine; by ABL1). Ser519 carries the post-translational modification Phosphoserine. The Protein kinase domain occupies Ile552 to Leu808. Residues Leu558–Val566 and Lys581 each bind ATP. The Proton acceptor role is filled by Asp675. Ser707 is subject to Phosphoserine; by PKC. Position 711 is a phosphoserine (Ser711). Phosphotyrosine; by ABL1 is present on Tyr718. An Important for ABL1-mediated Tyr-718 phosphorylation motif is present at residues Leu725–Gln727. Ser873 bears the Phosphoserine; by autocatalysis mark.

Belongs to the protein kinase superfamily. CAMK Ser/Thr protein kinase family. PKD subfamily. Interacts (via C-terminus) with LCK. Interacts (via N-terminus and zing-finger domain 1 and 2) with PRKCD in response to oxidative stress; the interaction is independent of PRKD2 tyrosine phosphorylation. It depends on Mg(2+) as a cofactor. In terms of processing, phosphorylation of Ser-873 correlates with the activation status of the kinase. Ser-707 is probably phosphorylated by PKC. Phosphorylation at Ser-244 by CSNK1D and CSNK1E promotes nuclear localization and substrate targeting. Phosphorylation at Ser-244, Ser-707 and Ser-711 is required for nuclear localization. Phosphorylated at Tyr-438 by ABL1 in response to oxidative stress. Phosphorylated at Tyr-718 by ABL1 specifically in response to oxidative stress; requires prior phosphorylation at Ser-707 or/and Ser-711.

It localises to the cytoplasm. The protein resides in the cell membrane. The protein localises to the golgi apparatus. Its subcellular location is the trans-Golgi network. It catalyses the reaction L-seryl-[protein] + ATP = O-phospho-L-seryl-[protein] + ADP + H(+). It carries out the reaction L-threonyl-[protein] + ATP = O-phospho-L-threonyl-[protein] + ADP + H(+). With respect to regulation, activated by DAG and phorbol esters. Phorbol-ester/DAG-type domains bind DAG, mediating translocation to membranes. Autophosphorylation of Ser-711 and phosphorylation of Ser-707 by PKC relieves auto-inhibition by the PH domain. Catalytic activity is further increased by phosphorylation at Tyr-718 in response to oxidative stress. In terms of biological role, serine/threonine-protein kinase that converts transient diacylglycerol (DAG) signals into prolonged physiological effects downstream of PKC, and is involved in the regulation of cell proliferation via MAPK1/3 (ERK1/2) signaling, oxidative stress-induced NF-kappa-B activation, inhibition of HDAC7 transcriptional repression, signaling downstream of T-cell antigen receptor (TCR) and cytokine production, and plays a role in Golgi membrane trafficking, angiogenesis, secretory granule release and cell adhesion. May potentiate mitogenesis induced by the neuropeptide bombesin by mediating an increase in the duration of MAPK1/3 (ERK1/2) signaling, which leads to accumulation of immediate-early gene products including FOS that stimulate cell cycle progression. In response to oxidative stress, is phosphorylated at Tyr-438 and Tyr-718 by ABL1, which leads to the activation of PRKD2 without increasing its catalytic activity, and mediates activation of NF-kappa-B. In response to the activation of the gastrin receptor CCKBR, is phosphorylated at Ser-244 by CSNK1D and CSNK1E, translocates to the nucleus, phosphorylates HDAC7, leading to nuclear export of HDAC7 and inhibition of HDAC7 transcriptional repression of NR4A1/NUR77. Upon TCR stimulation, is activated independently of ZAP70, translocates from the cytoplasm to the nucleus and is required for interleukin-2 (IL2) promoter up-regulation. During adaptive immune responses, is required in peripheral T-lymphocytes for the production of the effector cytokines IL2 and IFNG after TCR engagement and for optimal induction of antibody responses to antigens. In epithelial cells stimulated with lysophosphatidic acid (LPA), is activated through a PKC-dependent pathway and mediates LPA-stimulated interleukin-8 (IL8) secretion via a NF-kappa-B-dependent pathway. During TCR-induced T-cell activation, interacts with and is activated by the tyrosine kinase LCK, which results in the activation of the NFAT transcription factors. In the trans-Golgi network (TGN), regulates the fission of transport vesicles that are on their way to the plasma membrane and in polarized cells is involved in the transport of proteins from the TGN to the basolateral membrane. Plays an important role in endothelial cell proliferation and migration prior to angiogenesis, partly through modulation of the expression of KDR/VEGFR2 and FGFR1, two key growth factor receptors involved in angiogenesis. In secretory pathway, is required for the release of chromogranin-A (CHGA)-containing secretory granules from the TGN. Downstream of PRKCA, plays important roles in angiotensin-2-induced monocyte adhesion to endothelial cells. This is Serine/threonine-protein kinase D2 (Prkd2) from Rattus norvegicus (Rat).